A 1491-amino-acid polypeptide reads, in one-letter code: Chromosome partition protein MukB (1491 aa).

34–41 (GGNGAGKS) contacts ATP. Coiled coils occupy residues 302–418 (LIEQ…QYQQ), 488–600 (EVAR…RFES), 638–666 (ELEKAQSMAKDKLAERRAKLDSEIERLAS), 781–806 (RAAREQRLELLREERDDVVEQHAKAS), 836–1109 (EQAL…DLRT), and 1210–1239 (VEAIEEMEVELARLTEELTQREQRLAISSD). Positions 667–784 (PGGSNDPRLK…AIPLFGRAAR (118 aa)) are flexible hinge. The disordered stretch occupies residues 1059–1080 (QRRRDELQERLHTSRSRKSEYE).

This sequence belongs to the SMC family. MukB subfamily. As to quaternary structure, homodimerization via its hinge domain. Binds to DNA via its C-terminal region. Interacts, and probably forms a ternary complex, with MukE and MukF via its C-terminal region. The complex formation is stimulated by calcium or magnesium. Interacts with tubulin-related protein FtsZ.

The protein localises to the cytoplasm. Its subcellular location is the nucleoid. In terms of biological role, plays a central role in chromosome condensation, segregation and cell cycle progression. Functions as a homodimer, which is essential for chromosome partition. Involved in negative DNA supercoiling in vivo, and by this means organize and compact chromosomes. May achieve or facilitate chromosome segregation by condensation DNA from both sides of a centrally located replisome during cell division. The chain is Chromosome partition protein MukB from Vibrio cholerae serotype O1 (strain ATCC 39541 / Classical Ogawa 395 / O395).